A 124-amino-acid polypeptide reads, in one-letter code: Holo-[acyl-carrier-protein] synthase (124 aa).

Aspartate 8 and glutamate 56 together coordinate Mg(2+).

The protein belongs to the P-Pant transferase superfamily. AcpS family. Mg(2+) is required as a cofactor.

The protein resides in the cytoplasm. It carries out the reaction apo-[ACP] + CoA = holo-[ACP] + adenosine 3',5'-bisphosphate + H(+). Its function is as follows. Transfers the 4'-phosphopantetheine moiety from coenzyme A to a Ser of acyl-carrier-protein. In Nitratidesulfovibrio vulgaris (strain DP4) (Desulfovibrio vulgaris), this protein is Holo-[acyl-carrier-protein] synthase.